A 294-amino-acid chain; its full sequence is MRIRIAARGSKLSRIQVMMVENYLHKLGIETEFIEIKTKADLFQNEPLSKLGKGVFEKEVNQAVLDNKADVAVHSMKDILTEISENLEIYAVLPRDPPFDILISRKNLFNLEPNSIIGTSSIRRKNFLTFYRNDLNIKDLRGNIDTRLKKYFEGQYDGIIIAEASIYRLKEQVQYYRLDPHLFTPEANQGIIVVIGRKKDETIKKIFNEINDKDTLEIAIAERKALSIVGGGCHSPIGVYFEKYDKDFHGIISSSFGRKKITIEEYFHNMTPYEAGELLGKRFLEEIKNEGIIP.

An S-(dipyrrolylmethanemethyl)cysteine modification is found at C233.

It belongs to the HMBS family. Requires dipyrromethane as cofactor.

It carries out the reaction 4 porphobilinogen + H2O = hydroxymethylbilane + 4 NH4(+). It functions in the pathway porphyrin-containing compound metabolism; protoporphyrin-IX biosynthesis; coproporphyrinogen-III from 5-aminolevulinate: step 2/4. Tetrapolymerization of the monopyrrole PBG into the hydroxymethylbilane pre-uroporphyrinogen in several discrete steps. In Sulfurisphaera tokodaii (strain DSM 16993 / JCM 10545 / NBRC 100140 / 7) (Sulfolobus tokodaii), this protein is Probable porphobilinogen deaminase.